Here is a 1285-residue protein sequence, read N- to C-terminus: MSGTFSRCMCTPAARVFWNAGQVFCTRCLSARSLLSPELQDTDLGAVGLFYKPRDKLHWKVPIGIPQVECTPSGCCWLSAVFPLARMTSGNHNFLQRLVKVADVLYRDGCLAPRHLRELQVYERGCNWYPITGPVPGMGLFANSMHVSDQPFPGATHVLTNSPLPQQACRQPFCPFEEAHSSVYRWKKFVVFTDSSLNGRSRMMWTPESDDSAALEVLPPELERQVEILIRSFPAHHPVDLADWELTESPENGFSFNTSHSCGHLVQNPDVFDGKCWLSCFLGQSVEVRCHEEHLADAFGYQTKWGVHGKYLQRRLQVRGIRAVVDPDGPIHVEALSCPQSWIRHLTLDDDVTPGFVRLTSLRIVPNTEPTTSRIFRFGAHKWYGAAGKRARAKRAAKSEKDSAPTPKVALPVPTCGITTYSPPTDGSCGWHVLAAIMNRMINGDFTSPLTQYNRPEDDWASDYDLVQAIQCLRLPATVVRNRACPNAKYLIKLNGVHWEVEVRSGMAPRSLSRECVVGVCSEGCVAPPYPADGLPKRALEALASAYRLPSDCVSSGIADFLANPPPQEFWTLDKMLTSPSPERSGFSSLYKLLLEVVPQKCGATEGAFIYAVERMLKDCPSSKQAMALLAKIKVPSSKAPSVSLDECFPTDVLADFEPASQERPQSSGAAVVLCSPDAKEFEEAAPEEVQESGHKAVHSALLAEGPNNEQVQVVAGEQLKLGGCGLAVGNAHEGALVSAGLINLVGGNLSPSDPMKENMLNSREDEPLDLSQPAPASTTTLVREQTPDNPGSDAGALPVTVREFVPTGPILCHVEHCGTESGDSSSPLDLSDAQTLDQPLNLSLAAWPVRATASDPGWVHGRREPVFVKPRNAFSDGDSALQFGELSESSSVIEFDRTKDAPVVDAPVDLTTSNEALSVVDPFEFAELKRPRFSAQALIDRGGPLADVHAKIKNRVYEQCLQACEPGSRATPATREWLDKMWDRVDMKTWRCTSQFQAGRILASLKFLPDMIQDTPPPVPRKNRASDNAGLKQLVAQWDRKLSVTPPPKPVGPVLDQIVPPPTDIQQEDVTPSDGPPHAPDFPSRVSTGGSWKGLMLSGTRLAGSISQRLMTWVFLKFSPTSQLLCSHFSRRGALWLQVIGCLQVSFYLLSCSVVLTRYSDAFPYWVSFLVLCGVFVWVFLVLGWLLLYFYSRLHPTQSVLLVTTIRRSVMLSFWLLSSANFGNLCAALWSAPQASYVSFLASYSVGHVISGMFSYVYACLQIWPFLLFMWCPRGVVTSVGESV.

The C4-type; atypical zinc finger occupies 8–28 (CMCTPAARVFWNAGQVFCTRC). Residues 69-180 (ECTPSGCCWL…QPFCPFEEAH (112 aa)) form the Peptidase C31 domain. A PCP1-alpha region spans residues 69-182 (ECTPSGCCWL…FCPFEEAHSS (114 aa)). Residues cysteine 76 and histidine 146 each act as for Nsp1-alpha papain-like cysteine proteinase activity in the active site. Residues 269 to 384 (PDVFDGKCWL…IFRFGAHKWY (116 aa)) form a PCP1-beta region. In terms of domain architecture, Peptidase C32 spans 269–385 (PDVFDGKCWL…FRFGAHKWYG (117 aa)). Active-site for Nsp1-beta papain-like cysteine proteinase activity residues include cysteine 276 and histidine 345. 2 disordered regions span residues 752 to 797 (PSDP…DAGA) and 1050 to 1088 (KPVGPVLDQIVPPPTDIQQEDVTPSDGPPHAPDFPSRVS). Polar residues predominate over residues 775 to 790 (APASTTTLVREQTPDN). A run of 4 helical transmembrane segments spans residues 1136-1156 (LWLQVIGCLQVSFYLLSCSVV), 1170-1190 (FLVLCGVFVWVFLVLGWLLLY), 1211-1231 (VMLSFWLLSSANFGNLCAALW), and 1250-1270 (VISGMFSYVYACLQIWPFLLF).

It localises to the host nucleus. It is found in the host cytoplasm. The protein localises to the host membrane. In terms of biological role, inhibits host IFN-beta production. Plays a role in the degradation of the host transcriptional activator CREBBP protein. The degradation of host CREBBP which is a key component of the IFN enhanceosome is likely responsible for the inhibition of interferon mediated by Nsp1-alpha. Also participates in the inhibition of host NF-kappa-B activation. Plays a role in the inhibition of the interferon-activated JAK/STAT signal transduction by mediating the ubiquitination and subsequent proteasomal degradation of host KPNA1. Functionally, plays a role in viral replication. The protein is Replicase polyprotein 1TF of Porcine reproductive and respiratory syndrome virus (strain Lelystad) (PRRSV).